Consider the following 153-residue polypeptide: Lipoprotein signal peptidase (153 aa).

Helical transmembrane passes span 52–72 (ILAG…IGIV) and 81–101 (GQML…GNFI). Catalysis depends on residues aspartate 111 and aspartate 129. Residues 124-144 (IFNIADSSLCVGVILLFIHML) traverse the membrane as a helical segment.

This sequence belongs to the peptidase A8 family.

It localises to the cell membrane. The catalysed reaction is Release of signal peptides from bacterial membrane prolipoproteins. Hydrolyzes -Xaa-Yaa-Zaa-|-(S,diacylglyceryl)Cys-, in which Xaa is hydrophobic (preferably Leu), and Yaa (Ala or Ser) and Zaa (Gly or Ala) have small, neutral side chains.. It functions in the pathway protein modification; lipoprotein biosynthesis (signal peptide cleavage). This protein specifically catalyzes the removal of signal peptides from prolipoproteins. The sequence is that of Lipoprotein signal peptidase from Bacillus velezensis (strain DSM 23117 / BGSC 10A6 / LMG 26770 / FZB42) (Bacillus amyloliquefaciens subsp. plantarum).